Reading from the N-terminus, the 198-residue chain is uncharacterized protein (198 aa).

It is found in the cytoplasm. This is an uncharacterized protein from Saccharomyces cerevisiae (strain ATCC 204508 / S288c) (Baker's yeast).